Reading from the N-terminus, the 213-residue chain is Imidazoleglycerol-phosphate dehydratase (213 aa).

The protein belongs to the imidazoleglycerol-phosphate dehydratase family.

The protein resides in the cytoplasm. It catalyses the reaction D-erythro-1-(imidazol-4-yl)glycerol 3-phosphate = 3-(imidazol-4-yl)-2-oxopropyl phosphate + H2O. Its pathway is amino-acid biosynthesis; L-histidine biosynthesis; L-histidine from 5-phospho-alpha-D-ribose 1-diphosphate: step 6/9. This Trichodesmium erythraeum (strain IMS101) protein is Imidazoleglycerol-phosphate dehydratase.